We begin with the raw amino-acid sequence, 130 residues long: Protein ApaG (130 aa).

The region spanning Arg3–Arg127 is the ApaG domain.

This chain is Protein ApaG, found in Brucella anthropi (strain ATCC 49188 / DSM 6882 / CCUG 24695 / JCM 21032 / LMG 3331 / NBRC 15819 / NCTC 12168 / Alc 37) (Ochrobactrum anthropi).